Here is a 435-residue protein sequence, read N- to C-terminus: Tryptophan synthase beta chain (435 aa).

Position 92 is an N6-(pyridoxal phosphate)lysine (K92).

This sequence belongs to the TrpB family. As to quaternary structure, tetramer of two alpha and two beta chains. Requires pyridoxal 5'-phosphate as cofactor.

The catalysed reaction is (1S,2R)-1-C-(indol-3-yl)glycerol 3-phosphate + L-serine = D-glyceraldehyde 3-phosphate + L-tryptophan + H2O. Its pathway is amino-acid biosynthesis; L-tryptophan biosynthesis; L-tryptophan from chorismate: step 5/5. Functionally, the beta subunit is responsible for the synthesis of L-tryptophan from indole and L-serine. The sequence is that of Tryptophan synthase beta chain from Albidiferax ferrireducens (strain ATCC BAA-621 / DSM 15236 / T118) (Rhodoferax ferrireducens).